We begin with the raw amino-acid sequence, 192 residues long: NADH dehydrogenase [ubiquinone] iron-sulfur protein 3 (192 aa).

This sequence belongs to the complex I 30 kDa subunit family. In terms of assembly, complex I is composed of about 45 different subunits. This is a component of the iron-sulfur (IP) fragment of the enzyme.

The protein localises to the mitochondrion inner membrane. The catalysed reaction is a ubiquinone + NADH + 5 H(+)(in) = a ubiquinol + NAD(+) + 4 H(+)(out). Its function is as follows. Core subunit of the mitochondrial membrane respiratory chain NADH dehydrogenase (Complex I) that is believed to belong to the minimal assembly required for catalysis. Complex I functions in the transfer of electrons from NADH to the respiratory chain. The immediate electron acceptor for the enzyme is believed to be ubiquinone. This Beta trigyna (Caucasian wild beet) protein is NADH dehydrogenase [ubiquinone] iron-sulfur protein 3 (NAD9).